We begin with the raw amino-acid sequence, 437 residues long: tRNA-2-methylthio-N(6)-dimethylallyladenosine synthase (437 aa).

The MTTase N-terminal domain maps to 1–115 (MKVYIETMGC…ISQVIHKEKA (115 aa)). 6 residues coordinate [4Fe-4S] cluster: cysteine 10, cysteine 46, cysteine 78, cysteine 148, cysteine 152, and cysteine 155. In terms of domain architecture, Radical SAM core spans 134–367 (KKAQIRSLLN…QNRHKEILEE (234 aa)). The region spanning 370 to 436 (KLEVGKTHVV…KGRLMATTKG (67 aa)) is the TRAM domain.

It belongs to the methylthiotransferase family. MiaB subfamily. As to quaternary structure, monomer. Requires [4Fe-4S] cluster as cofactor.

It localises to the cytoplasm. It carries out the reaction N(6)-dimethylallyladenosine(37) in tRNA + (sulfur carrier)-SH + AH2 + 2 S-adenosyl-L-methionine = 2-methylsulfanyl-N(6)-dimethylallyladenosine(37) in tRNA + (sulfur carrier)-H + 5'-deoxyadenosine + L-methionine + A + S-adenosyl-L-homocysteine + 2 H(+). Catalyzes the methylthiolation of N6-(dimethylallyl)adenosine (i(6)A), leading to the formation of 2-methylthio-N6-(dimethylallyl)adenosine (ms(2)i(6)A) at position 37 in tRNAs that read codons beginning with uridine. The sequence is that of tRNA-2-methylthio-N(6)-dimethylallyladenosine synthase from Helicobacter pylori (strain J99 / ATCC 700824) (Campylobacter pylori J99).